The primary structure comprises 653 residues: Translation factor GUF1, mitochondrial (653 aa).

The 181-residue stretch at 56–236 folds into the tr-type G domain; it reads ENYRNFSIVA…SIIKNIPAPN (181 aa). GTP contacts are provided by residues 65 to 72, 129 to 133, and 183 to 186; these read AHVDHGKS, DTPGH, and NKID.

The protein belongs to the TRAFAC class translation factor GTPase superfamily. Classic translation factor GTPase family. LepA subfamily.

The protein localises to the mitochondrion inner membrane. It carries out the reaction GTP + H2O = GDP + phosphate + H(+). Functionally, promotes mitochondrial protein synthesis. May act as a fidelity factor of the translation reaction, by catalyzing a one-codon backward translocation of tRNAs on improperly translocated ribosomes. Binds to mitochondrial ribosomes in a GTP-dependent manner. This is Translation factor GUF1, mitochondrial from Candida tropicalis (strain ATCC MYA-3404 / T1) (Yeast).